A 510-amino-acid polypeptide reads, in one-letter code: Cytochrome P450 monooxygenase macH (510 aa).

Residues 7–29 (LPVSLWLIAAGTFAVYHAIRAVY) traverse the membrane as a helical segment. Cys454 serves as a coordination point for heme.

This sequence belongs to the cytochrome P450 family. It depends on heme as a cofactor.

It is found in the membrane. It functions in the pathway secondary metabolite biosynthesis; terpenoid biosynthesis. Its function is as follows. Cytochrome P450 monooxygenase; part of the gene cluster that mediates the biosynthesis of macrophorins, isoprenoid epoxycyclohexenones containing cyclized drimane moieties. The first step of the pathway is the synthesis of 6-methylsalicylic acid (6-MSA) by the polyketide synthase macA. 6-MSA is then converted to m-cresol by the decarboxylase macB. The cytochrome P450 monooxygenase macC then catalyzes the oxidation of m-cresol to toluquinol. Epoxidation of toluquinol is then performed by the short chain dehydrogenase macD, with the help of macE, and a further prenylation by macG leads to 7-deacetoxyyanuthone A. The next step is the hydroxylation of C-22 of 7-deacetoxyyanuthone A by the cytochrome P450 monooxygenase macH to yield 22-deacetylyanuthone A. O-Mevalon transferase macI then attaches mevalon to the hydroxyl group of 22-deacetylyanuthone A to produce yanuthone E. The terpene cyclase macJ catalyzes the cyclization of 22-deacetylyanuthone A to macrophorin A. MacJ is also able to catalyze cyclization of yanuthone E and 7-deacetoxyyanuthone A to their corresponding macrophorins. The macJ products can be further modified by macH and macJ, as well as by the FAD-dependent monooxygenase macF, to produce additional macrophorins, including 4'-oxomacrophorin A, 4'-oxomacrophorin D and 4'-oxomacrophorin E. In Penicillium terrestre, this protein is Cytochrome P450 monooxygenase macH.